Consider the following 424-residue polypeptide: Serine--tRNA ligase (424 aa).

232 to 234 lines the L-serine pocket; it reads TAE. 263 to 265 serves as a coordination point for ATP; the sequence is RSE. Residue E286 participates in L-serine binding. 350–353 contacts ATP; sequence EISS. S385 is a binding site for L-serine.

The protein belongs to the class-II aminoacyl-tRNA synthetase family. Type-1 seryl-tRNA synthetase subfamily. As to quaternary structure, homodimer. The tRNA molecule binds across the dimer.

It is found in the cytoplasm. It catalyses the reaction tRNA(Ser) + L-serine + ATP = L-seryl-tRNA(Ser) + AMP + diphosphate + H(+). The enzyme catalyses tRNA(Sec) + L-serine + ATP = L-seryl-tRNA(Sec) + AMP + diphosphate + H(+). It functions in the pathway aminoacyl-tRNA biosynthesis; selenocysteinyl-tRNA(Sec) biosynthesis; L-seryl-tRNA(Sec) from L-serine and tRNA(Sec): step 1/1. Functionally, catalyzes the attachment of serine to tRNA(Ser). Is also able to aminoacylate tRNA(Sec) with serine, to form the misacylated tRNA L-seryl-tRNA(Sec), which will be further converted into selenocysteinyl-tRNA(Sec). The polypeptide is Serine--tRNA ligase (Latilactobacillus sakei subsp. sakei (strain 23K) (Lactobacillus sakei subsp. sakei)).